A 49-amino-acid chain; its full sequence is Multidrug efflux pump accessory protein AcrZ (49 aa).

The Periplasmic portion of the chain corresponds to 1 to 7 (MLELLKS). Residues 8–28 (LVFAVIMVPVVMAIILGLIYG) traverse the membrane as a helical segment. Topologically, residues 29 to 49 (LGEVFNIFSGVGKKDQPGQNH) are cytoplasmic.

Belongs to the AcrZ family. In terms of assembly, part of the AcrA-AcrB-AcrZ-TolC efflux pump, interacts directly with AcrB.

It localises to the cell inner membrane. AcrA-AcrB-AcrZ-TolC is a drug efflux protein complex with a broad substrate specificity. This protein binds to AcrB and is required for efflux of some but not all substrates, suggesting it may influence the specificity of drug export. The sequence is that of Multidrug efflux pump accessory protein AcrZ from Escherichia coli O157:H7.